Reading from the N-terminus, the 542-residue chain is Phosphoglucomutase (542 aa).

Substrate is bound by residues T17, R21, 112–113 (SH), and K125. Catalysis depends on S112, which acts as the Phosphoserine intermediate. Residue S112 coordinates Mg(2+). Mg(2+)-binding residues include D276, D278, and D280. Residues 280–281 (DR), T343, 362–364 (EES), K375, and R495 contribute to the substrate site.

This sequence belongs to the phosphohexose mutase family. The cofactor is Mg(2+).

The enzyme catalyses alpha-D-glucose 1-phosphate = alpha-D-glucose 6-phosphate. This enzyme participates in both the breakdown and synthesis of glucose. Required for the synthesis of capsular polysaccharide and normal lipopolysaccharide. The chain is Phosphoglucomutase (pgm) from Rhizobium radiobacter (Agrobacterium tumefaciens).